The chain runs to 132 residues: Small ribosomal subunit protein uS11 (132 aa).

Residues 110–132 form a disordered region; the sequence is IEDVTPVPSDSTRRKGGRRGRRL. Residues 123–132 are compositionally biased toward basic residues; sequence RKGGRRGRRL.

This sequence belongs to the universal ribosomal protein uS11 family. In terms of assembly, component of the small ribosomal subunit. Mature ribosomes consist of a small (40S) and a large (60S) subunit. The 40S subunit contains about 32 different proteins and 1 molecule of RNA (18S). The 60S subunit contains 45 different proteins and 3 molecules of RNA (25S, 5.8S and 5S).

The protein resides in the cytoplasm. Component of the ribosome, a large ribonucleoprotein complex responsible for the synthesis of proteins in the cell. The small ribosomal subunit (SSU) binds messenger RNAs (mRNAs) and translates the encoded message by selecting cognate aminoacyl-transfer RNA (tRNA) molecules. The large subunit (LSU) contains the ribosomal catalytic site termed the peptidyl transferase center (PTC), which catalyzes the formation of peptide bonds, thereby polymerizing the amino acids delivered by tRNAs into a polypeptide chain. The nascent polypeptides leave the ribosome through a tunnel in the LSU and interact with protein factors that function in enzymatic processing, targeting, and the membrane insertion of nascent chains at the exit of the ribosomal tunnel. RPS14B is involved in nucleolar processing of pre-18S ribosomal RNA and ribosome assembly. The sequence is that of Small ribosomal subunit protein uS11 (RPS14B) from Candida albicans (strain SC5314 / ATCC MYA-2876) (Yeast).